Here is a 698-residue protein sequence, read N- to C-terminus: Serine/alanine racemase (698 aa).

Over 1–10 the chain is Cytoplasmic; that stretch reads MKNKGIDQFR. A helical membrane pass occupies residues 11-31; it reads VIAAMMVVAIHCLPLHYLWPE. The Extracellular segment spans residues 32-42; the sequence is GDILITLTIFR. A helical membrane pass occupies residues 43 to 63; the sequence is VAVPFFFMISGYYVFAELAVA. Topologically, residues 64 to 81 are cytoplasmic; sequence NSYPSRQRVFNFIKKQLK. A helical transmembrane segment spans residues 82–102; that stretch reads VYLLATLMFLPLALYSQTIGF. Residues 103–121 lie on the Extracellular side of the membrane; the sequence is DLPVGTLVQVLLVNGILYH. A helical membrane pass occupies residues 122–142; the sequence is LWYFPALITGSLLLTSLLIHV. Residues 143–147 are Cytoplasmic-facing; it reads SFKKV. Residues 148–168 traverse the membrane as a helical segment; the sequence is FWLAAGLYLIGLGGDSWFGLI. The Extracellular portion of the chain corresponds to 169–183; the sequence is QQTPIEPFYTAVFHL. A helical membrane pass occupies residues 184–204; sequence LDGTRNGIFFTPLFLCLGVLV. At 205-216 the chain is on the cytoplasmic side; it reads RKQSEKRSLSKT. The chain crosses the membrane as a helical span at residues 217–237; that stretch reads ALFFLISLIGLLIESAYLHGF. Over 238 to 244 the chain is Extracellular; that stretch reads SIPKHDS. The chain crosses the membrane as a helical span at residues 245-265; the sequence is MYLFLPVVLFFLFPLILRWHP. Topologically, residues 266–274 are cytoplasmic; sequence HRTWKHPGQ. A helical transmembrane segment spans residues 275–295; sequence LSLWLYLLHPYTIAGTHFLSQ. Topologically, residues 296 to 301 are extracellular; sequence KISILQ. The helical transmembrane segment at 302–322 threads the bilayer; the sequence is NNLINYLVVLILTIGFICLFL. The Cytoplasmic portion of the chain corresponds to 323–698; it reads RQKHSWFRHK…IGPRVSARIK (376 aa). The interval 332–698 is racemase; that stretch reads KQTTPVKRAV…IGPRVSARIK (367 aa). K371 serves as the catalytic Proton acceptor. K371 carries the post-translational modification N6-(pyridoxal phosphate)lysine. A substrate-binding site is contributed by R465. Y597 acts as the Proton acceptor in catalysis. M646 is a binding site for substrate.

It in the N-terminal section; belongs to the acyltransferase 3 family. The protein in the C-terminal section; belongs to the alanine racemase family. As to quaternary structure, homodimer. Pyridoxal 5'-phosphate serves as cofactor.

Its subcellular location is the cell membrane. It carries out the reaction L-alanine = D-alanine. It catalyses the reaction L-serine = D-serine. Its pathway is amino-acid biosynthesis; D-alanine biosynthesis; D-alanine from L-alanine: step 1/1. Catalyzes the interconversion of L-serine and D-serine, and L-alanine and D-alanine. L-alanine is racemized at a rate that is 14% of that of L-serine. Together with VanC/VanC1 and VanXYC, required for vancomycin resistance in E.gallinarum strain BM4174. This chain is Serine/alanine racemase, found in Enterococcus gallinarum.